The primary structure comprises 389 residues: 26S proteasome non-ATPase regulatory subunit 6 (389 aa).

One can recognise a PCI domain in the interval 193–361 (DFKQAAELFL…EVVETNRPDS (169 aa)).

It belongs to the proteasome subunit S10 family. Component of the 19S proteasome regulatory particle complex. The 26S proteasome consists of a 20S core particle (CP) and two 19S regulatory subunits (RP). The regulatory particle is made of a lid composed of 9 subunits including PSMD6, a base containing 6 ATPases and few additional components.

Its function is as follows. Component of the 26S proteasome, a multiprotein complex involved in the ATP-dependent degradation of ubiquitinated proteins. This complex plays a key role in the maintenance of protein homeostasis by removing misfolded or damaged proteins, which could impair cellular functions, and by removing proteins whose functions are no longer required. Therefore, the proteasome participates in numerous cellular processes, including cell cycle progression, apoptosis, or DNA damage repair. The polypeptide is 26S proteasome non-ATPase regulatory subunit 6 (PSMD6) (Bos taurus (Bovine)).